We begin with the raw amino-acid sequence, 394 residues long: Phosphopentomutase (394 aa).

Mn(2+) is bound by residues D15, D288, H293, D329, H330, and H341.

Belongs to the phosphopentomutase family. It depends on Mn(2+) as a cofactor.

It localises to the cytoplasm. It carries out the reaction 2-deoxy-alpha-D-ribose 1-phosphate = 2-deoxy-D-ribose 5-phosphate. The catalysed reaction is alpha-D-ribose 1-phosphate = D-ribose 5-phosphate. It functions in the pathway carbohydrate degradation; 2-deoxy-D-ribose 1-phosphate degradation; D-glyceraldehyde 3-phosphate and acetaldehyde from 2-deoxy-alpha-D-ribose 1-phosphate: step 1/2. In terms of biological role, isomerase that catalyzes the conversion of deoxy-ribose 1-phosphate (dRib-1-P) and ribose 1-phosphate (Rib-1-P) to deoxy-ribose 5-phosphate (dRib-5-P) and ribose 5-phosphate (Rib-5-P), respectively. This Bacillus pumilus (strain SAFR-032) protein is Phosphopentomutase.